An 88-amino-acid chain; its full sequence is Small ribosomal subunit protein bS16 (88 aa).

Belongs to the bacterial ribosomal protein bS16 family.

The polypeptide is Small ribosomal subunit protein bS16 (Buchnera aphidicola subsp. Cinara cedri (strain Cc)).